The following is a 154-amino-acid chain: Myoglobin (154 aa).

The region spanning 2–148 (VLSEGEWQLV…FRKDIAAKYK (147 aa)) is the Globin domain. The residue at position 4 (Ser-4) is a Phosphoserine. His-65 provides a ligand contact to nitrite. An O2-binding site is contributed by His-65. Residue Thr-68 is modified to Phosphothreonine. His-94 provides a ligand contact to heme b.

The protein belongs to the globin family. In terms of assembly, monomeric.

It localises to the cytoplasm. The protein localises to the sarcoplasm. It catalyses the reaction Fe(III)-heme b-[protein] + nitric oxide + H2O = Fe(II)-heme b-[protein] + nitrite + 2 H(+). It carries out the reaction H2O2 + AH2 = A + 2 H2O. In terms of biological role, monomeric heme protein which primary function is to store oxygen and facilitate its diffusion within muscle tissues. Reversibly binds oxygen through a pentacoordinated heme iron and enables its timely and efficient release as needed during periods of heightened demand. Depending on the oxidative conditions of tissues and cells, and in addition to its ability to bind oxygen, it also has a nitrite reductase activity whereby it regulates the production of bioactive nitric oxide. Under stress conditions, like hypoxia and anoxia, it also protects cells against reactive oxygen species thanks to its pseudoperoxidase activity. This chain is Myoglobin (MB), found in Physeter macrocephalus (Sperm whale).